The chain runs to 389 residues: Nicotinate phosphoribosyltransferase (389 aa).

Histidine 216 carries the phosphohistidine; by autocatalysis modification.

It belongs to the NAPRTase family. Transiently phosphorylated on a His residue during the reaction cycle. Phosphorylation strongly increases the affinity for substrates and increases the rate of nicotinate D-ribonucleotide production. Dephosphorylation regenerates the low-affinity form of the enzyme, leading to product release.

The enzyme catalyses nicotinate + 5-phospho-alpha-D-ribose 1-diphosphate + ATP + H2O = nicotinate beta-D-ribonucleotide + ADP + phosphate + diphosphate. It participates in cofactor biosynthesis; NAD(+) biosynthesis; nicotinate D-ribonucleotide from nicotinate: step 1/1. Functionally, catalyzes the synthesis of beta-nicotinate D-ribonucleotide from nicotinate and 5-phospho-D-ribose 1-phosphate at the expense of ATP. In Ralstonia pickettii (strain 12J), this protein is Nicotinate phosphoribosyltransferase.